Here is a 512-residue protein sequence, read N- to C-terminus: Polyamine aminopropyltransferase (512 aa).

Transmembrane regions (helical) follow at residues 19–39, 48–68, 76–96, 108–128, 151–171, 172–192, and 199–219; these read IVSI…SYIL, LTIS…EKFM, VWIE…MFGI, YLYS…PILI, AGGL…FGMV, KTAF…LWLF, and FIVH…GLFF. In terms of domain architecture, PABS spans 215-450; the sequence is AGLFFGEEMA…GNWGFVMASR (236 aa). Residues 217–457 form a spermidine synthase region; sequence LFFGEEMAFN…ASREEIDLDI (241 aa). Gln245 provides a ligand contact to S-methyl-5'-thioadenosine. 2 residues coordinate spermidine: His275 and Asp299. S-methyl-5'-thioadenosine contacts are provided by residues Asp319 and 353–354; that span reads DA. The active-site Proton acceptor is Asp371.

The protein belongs to the spermidine/spermine synthase family. Homodimer or homotetramer.

Its subcellular location is the cell membrane. The catalysed reaction is S-adenosyl 3-(methylsulfanyl)propylamine + putrescine = S-methyl-5'-thioadenosine + spermidine + H(+). Its pathway is amine and polyamine biosynthesis; spermidine biosynthesis; spermidine from putrescine: step 1/1. In terms of biological role, catalyzes the irreversible transfer of a propylamine group from the amino donor S-adenosylmethioninamine (decarboxy-AdoMet) to putrescine (1,4-diaminobutane) to yield spermidine. This is Polyamine aminopropyltransferase from Oceanobacillus iheyensis (strain DSM 14371 / CIP 107618 / JCM 11309 / KCTC 3954 / HTE831).